The chain runs to 671 residues: MESIEQQLTELRTTLRHHEYLYHVMDAPEIPDAEYDRLMRELRELETKHPELITPDSPTQRVGAAPLAAFSQIRHEVPMLSLDNVFDEESFLAFNKRVQDRLKNNEKVTWCCELKLDGLAVSILYENGVLVSAATRGDGTTGEDITSNVRTIRAIPLKLHGENIPARLEVRGEVFLPQAGFEKINEDARRTGGKVFANPRNAAAGSLRQLDPRITAKRPLTFFCYGVGVLEGGELPDTHLGRLLQFKKWGLPVSDRVTLCESAEEVLAFYHKVEEDRPTLGFDIDGVVIKVNSLAQQEQLGFVARAPRWAVAFKFPAQEQMTFVRDVEFQVGRTGAITPVARLEPVHVAGVLVSNATLHNADEIERLGLRIGDKVVIRRAGDVIPQVVNVVLSERPEDTREVVFPTHCPVCGSDVERVEGEAVARCTGGLICGAQRKESLKHFVSRRAMDVDGMGDKIIDQLVEKEYVHTPADLFKLTAGKLTGLERMGPKSAQNVVNALEKAKETTFARFLYALGIREVGEATAAGLAAYFGTLEALEAASIEELQKVPDVGIVVASHVHNFFAEESNRNVISELLAEGVHWPAPIVINAEEIDSPFAGKTVVLTGSLSQMSRDDAKARLVELGAKVAGSVSKKTDLVIAGEAAGSKLAKAQELGIEVIDEAEMLRLLGS.

Residues 32-36, 81-82, and Glu-113 contribute to the NAD(+) site; these read DAEYD and SL. Lys-115 (N6-AMP-lysine intermediate) is an active-site residue. NAD(+) is bound by residues Arg-136, Glu-173, Lys-290, and Lys-314. 4 residues coordinate Zn(2+): Cys-408, Cys-411, Cys-426, and Cys-432. Residues 593–671 form the BRCT domain; sequence EIDSPFAGKT…EAEMLRLLGS (79 aa).

The protein belongs to the NAD-dependent DNA ligase family. LigA subfamily. It depends on Mg(2+) as a cofactor. The cofactor is Mn(2+).

The enzyme catalyses NAD(+) + (deoxyribonucleotide)n-3'-hydroxyl + 5'-phospho-(deoxyribonucleotide)m = (deoxyribonucleotide)n+m + AMP + beta-nicotinamide D-nucleotide.. DNA ligase that catalyzes the formation of phosphodiester linkages between 5'-phosphoryl and 3'-hydroxyl groups in double-stranded DNA using NAD as a coenzyme and as the energy source for the reaction. It is essential for DNA replication and repair of damaged DNA. The sequence is that of DNA ligase from Escherichia coli (strain ATCC 8739 / DSM 1576 / NBRC 3972 / NCIMB 8545 / WDCM 00012 / Crooks).